A 436-amino-acid polypeptide reads, in one-letter code: Gamma-glutamyl phosphate reductase (436 aa).

It belongs to the gamma-glutamyl phosphate reductase family.

Its subcellular location is the cytoplasm. It carries out the reaction L-glutamate 5-semialdehyde + phosphate + NADP(+) = L-glutamyl 5-phosphate + NADPH + H(+). Its pathway is amino-acid biosynthesis; L-proline biosynthesis; L-glutamate 5-semialdehyde from L-glutamate: step 2/2. Catalyzes the NADPH-dependent reduction of L-glutamate 5-phosphate into L-glutamate 5-semialdehyde and phosphate. The product spontaneously undergoes cyclization to form 1-pyrroline-5-carboxylate. In Prochlorococcus marinus (strain SARG / CCMP1375 / SS120), this protein is Gamma-glutamyl phosphate reductase.